The sequence spans 108 residues: Flagellar hook-basal body complex protein FliE (108 aa).

This sequence belongs to the FliE family.

It is found in the bacterial flagellum basal body. The polypeptide is Flagellar hook-basal body complex protein FliE (Pseudomonas fluorescens (strain ATCC BAA-477 / NRRL B-23932 / Pf-5)).